Consider the following 689-residue polypeptide: MSKRVYEIAKELDLDTKEVIGRLNAAGIEVKNHFATVEDPDYERVFGGGNGRSEAGEERGRKGRQKKRRRVVIDASATNRGPRAAAPSRPSRGRGAAREEAPAAEEREAPEVVRVEPGATVRDLGEALGVPPTRIIQILMGLGEMKTVTQTLSTEEIELVAEELGRRVEVGALEEPAPEEIGPEDSPEDLVEKPPVITVMGHVDHGKTSLLDRIRRTNVVSGEAGGITQHIGAYQVEHEGRRITFIDTPGHEAFTEMRARGARVTDIVVLVVAADDGVMPQTEEAIEHARAAGVPIVVAINKIDVPNANPDRVMGELAERGLTPEQWGGETVTVPVSAKTGEGIEDLLENILVVAELEELRANPKAPASGYVIESRLDPGRGPVATLLLNRGTLHRGDVVLAGTAYGRVRAMFDYTGQRIKEAGPGTPVEILGLSGVPEAGTRFEVAENERAARSRAQQAEERLRRQELAASGPRRTTLEELLGEGGAEELNLVVKADVAGSVEALKEALAKLSTDEVRVNVVRSGVGAVTDSDIMLASASGGIVIGFNVRPTNTAKQVAEREGVEIRTYDVIYKVIEEIEAAMKGMLAPETAERETATAEVRATFRVPNVGTVAGCYVTSGEIRRNNRVRVVRDGTVVYDGQIASLKRFKDDVRTVREGFECGVGIENFNDVKEGDVLEFYEVVEIPR.

Positions 41–109 are disordered; the sequence is DYERVFGGGN…EAPAAEEREA (69 aa). Residues 61 to 70 show a composition bias toward basic residues; sequence RKGRQKKRRR. The segment covering 80-94 has biased composition (low complexity); sequence RGPRAAAPSRPSRGR. Residues 96–109 show a composition bias toward basic and acidic residues; sequence AAREEAPAAEEREA. In terms of domain architecture, tr-type G spans 192-361; that stretch reads EKPPVITVMG…LVVAELEELR (170 aa). The tract at residues 201–208 is G1; that stretch reads GHVDHGKT. 201 to 208 is a GTP binding site; it reads GHVDHGKT. The G2 stretch occupies residues 226–230; sequence GITQH. The G3 stretch occupies residues 247–250; that stretch reads DTPG. Residues 247 to 251 and 301 to 304 contribute to the GTP site; these read DTPGH and NKID. Positions 301-304 are G4; it reads NKID. The tract at residues 337 to 339 is G5; the sequence is SAK.

It belongs to the TRAFAC class translation factor GTPase superfamily. Classic translation factor GTPase family. IF-2 subfamily.

It is found in the cytoplasm. Its function is as follows. One of the essential components for the initiation of protein synthesis. Protects formylmethionyl-tRNA from spontaneous hydrolysis and promotes its binding to the 30S ribosomal subunits. Also involved in the hydrolysis of GTP during the formation of the 70S ribosomal complex. The sequence is that of Translation initiation factor IF-2 from Rubrobacter xylanophilus (strain DSM 9941 / JCM 11954 / NBRC 16129 / PRD-1).